We begin with the raw amino-acid sequence, 269 residues long: Flagellar hook-basal body complex protein FlhP (269 aa).

A coiled-coil region spans residues threonine 7 to threonine 65.

This sequence belongs to the flagella basal body rod proteins family.

This is Flagellar hook-basal body complex protein FlhP (flhP) from Bacillus subtilis (strain 168).